A 458-amino-acid chain; its full sequence is Transmembrane protein 135 (458 aa).

Transmembrane regions (helical) follow at residues 68–88 (ILQS…FFCI), 96–116 (FYLW…AILV), 149–169 (TLRN…MFFF), 298–318 (FQLG…SCFL), 331–351 (IIAG…TISM), and 380–400 (IIYS…VQTL).

It belongs to the TMEM135 family.

The protein resides in the mitochondrion membrane. It localises to the peroxisome membrane. Involved in mitochondrial metabolism by regulating the balance between mitochondrial fusion and fission. May act as a regulator of mitochondrial fission that promotes DNM1L-dependent fission through activation of DNM1L. May be involved in peroxisome organization. The polypeptide is Transmembrane protein 135 (Bos taurus (Bovine)).